A 209-amino-acid polypeptide reads, in one-letter code: Protein-L-isoaspartate O-methyltransferase (209 aa).

Ser-55 is an active-site residue.

Belongs to the methyltransferase superfamily. L-isoaspartyl/D-aspartyl protein methyltransferase family.

Its subcellular location is the cytoplasm. The catalysed reaction is [protein]-L-isoaspartate + S-adenosyl-L-methionine = [protein]-L-isoaspartate alpha-methyl ester + S-adenosyl-L-homocysteine. In terms of biological role, catalyzes the methyl esterification of L-isoaspartyl residues in peptides and proteins that result from spontaneous decomposition of normal L-aspartyl and L-asparaginyl residues. It plays a role in the repair and/or degradation of damaged proteins. In Anaeromyxobacter dehalogenans (strain 2CP-1 / ATCC BAA-258), this protein is Protein-L-isoaspartate O-methyltransferase.